We begin with the raw amino-acid sequence, 245 residues long: Gas vesicle protein F (245 aa).

It belongs to the gas vesicle GvpF/GvpL family. As to quaternary structure, binds GvpA.

The protein resides in the gas vesicle. Its function is as follows. A minor component of the gas vesicle, may be involved in preventing GvpA aggregation during gas vesicle nucleation. Gas vesicles (GV) are hollow, gas filled proteinaceous nanostructures. During planktonic growth they allow positioning of the organism at a favorable depth for light or nutrient acquisition. This Dolichospermum flosaquae (Anabaena flos-aquae) protein is Gas vesicle protein F.